The sequence spans 230 residues: Ribonuclease HII (230 aa).

Residues 1–224 enclose the RNase H type-2 domain; the sequence is MIIIGIDEAG…CKRILDKSKQ (224 aa). A divalent metal cation contacts are provided by aspartate 7, glutamate 8, and aspartate 112.

The protein belongs to the RNase HII family. Requires Mn(2+) as cofactor. It depends on Mg(2+) as a cofactor.

It is found in the cytoplasm. The enzyme catalyses Endonucleolytic cleavage to 5'-phosphomonoester.. In terms of biological role, endonuclease that specifically degrades the RNA of RNA-DNA hybrids. This Methanocaldococcus jannaschii (strain ATCC 43067 / DSM 2661 / JAL-1 / JCM 10045 / NBRC 100440) (Methanococcus jannaschii) protein is Ribonuclease HII (rnhB).